The primary structure comprises 191 residues: uncharacterized protein (191 aa).

This is an uncharacterized protein from Methanocaldococcus jannaschii (strain ATCC 43067 / DSM 2661 / JAL-1 / JCM 10045 / NBRC 100440) (Methanococcus jannaschii).